A 679-amino-acid polypeptide reads, in one-letter code: Enzymatic polyprotein (679 aa).

The tract at residues 40-130 (LHCFVDTGAS…LYEPFIQFTD (91 aa)) is protease. Asp-45 is an active-site residue. Residues 272–452 (LKVIKPSKSP…KKINFLGLEI (181 aa)) enclose the Reverse transcriptase domain.

The protein belongs to the caulimoviridae enzymatic polyprotein family.

The catalysed reaction is DNA(n) + a 2'-deoxyribonucleoside 5'-triphosphate = DNA(n+1) + diphosphate. In terms of biological role, encodes for at least two polypeptides: protease (PR) and reverse transcriptase (RT). The protease processes the polyprotein in cis. Reverse transcriptase is multifunctional enzyme that converts the viral RNA genome into dsDNA in viral cytoplasmic capsids. This enzyme displays a DNA polymerase activity that can copy either DNA or RNA templates, and a ribonuclease H (RNase H) activity that cleaves the RNA strand of RNA-DNA heteroduplexes in a partially processive 3'- to 5'-endonucleasic mode. Neo-synthesized pregenomic RNA (pgRNA) are encapsidated, and reverse-transcribed inside the nucleocapsid. Partial (+)DNA is synthesized from the (-)DNA template and generates the relaxed circular DNA (RC-DNA) genome. After budding and infection, the RC-DNA migrates in the nucleus, and is converted into a plasmid-like covalently closed circular DNA (cccDNA). This Cauliflower mosaic virus (strain CM-1841) (CaMV) protein is Enzymatic polyprotein.